The chain runs to 262 residues: Phosphonates import ATP-binding protein PhnC (262 aa).

The ABC transporter domain occupies I5–N253. G37–S44 provides a ligand contact to ATP.

This sequence belongs to the ABC transporter superfamily. Phosphonates importer (TC 3.A.1.9.1) family. As to quaternary structure, the complex is composed of two ATP-binding proteins (PhnC), two transmembrane proteins (PhnE) and a solute-binding protein (PhnD).

Its subcellular location is the cell inner membrane. The enzyme catalyses phosphonate(out) + ATP + H2O = phosphonate(in) + ADP + phosphate + H(+). Its function is as follows. Part of the ABC transporter complex PhnCDE involved in phosphonates import. Responsible for energy coupling to the transport system. This Escherichia coli O157:H7 protein is Phosphonates import ATP-binding protein PhnC.